An 817-amino-acid chain; its full sequence is Lon protease (817 aa).

A Lon N-terminal domain is found at 22–216 (VPIMPLSDGV…KVTRQLNHQL (195 aa)). ATP is bound at residue 368-375 (GPPGTGKT). The Lon proteolytic domain occupies 604-785 (ALTPGVVMGL…GDVLELALNG (182 aa)). Residues Ser691 and Lys734 contribute to the active site. The tract at residues 784–817 (NGNGATKKKKKTPAKSKKSTKPAAKKTAARKSRK) is disordered. A compositionally biased stretch (basic residues) spans 789-817 (TKKKKKTPAKSKKSTKPAAKKTAARKSRK).

Belongs to the peptidase S16 family. Homohexamer. Organized in a ring with a central cavity.

It is found in the cytoplasm. The enzyme catalyses Hydrolysis of proteins in presence of ATP.. Its function is as follows. ATP-dependent serine protease that mediates the selective degradation of mutant and abnormal proteins as well as certain short-lived regulatory proteins. Required for cellular homeostasis and for survival from DNA damage and developmental changes induced by stress. Degrades polypeptides processively to yield small peptide fragments that are 5 to 10 amino acids long. Binds to DNA in a double-stranded, site-specific manner. This Desulfosudis oleivorans (strain DSM 6200 / JCM 39069 / Hxd3) (Desulfococcus oleovorans) protein is Lon protease.